We begin with the raw amino-acid sequence, 170 residues long: Putative pre-16S rRNA nuclease (170 aa).

The tract at residues 1-25 is disordered; the sequence is MVPAQHRPPDRPGDPAHDPGRGRRL. The span at 7 to 21 shows a compositional bias: basic and acidic residues; it reads RPPDRPGDPAHDPGR.

The protein belongs to the YqgF nuclease family.

The protein resides in the cytoplasm. Functionally, could be a nuclease involved in processing of the 5'-end of pre-16S rRNA. In Mycobacterium tuberculosis (strain ATCC 25177 / H37Ra), this protein is Putative pre-16S rRNA nuclease.